Here is a 153-residue protein sequence, read N- to C-terminus: Large ribosomal subunit protein uL22 (153 aa).

The interval 128–153 (ADRRARRAAAKPAASASPAANEGVPA) is disordered. Low complexity predominate over residues 137–147 (AKPAASASPAA).

The protein belongs to the universal ribosomal protein uL22 family. In terms of assembly, part of the 50S ribosomal subunit.

Its function is as follows. This protein binds specifically to 23S rRNA; its binding is stimulated by other ribosomal proteins, e.g. L4, L17, and L20. It is important during the early stages of 50S assembly. It makes multiple contacts with different domains of the 23S rRNA in the assembled 50S subunit and ribosome. The globular domain of the protein is located near the polypeptide exit tunnel on the outside of the subunit, while an extended beta-hairpin is found that lines the wall of the exit tunnel in the center of the 70S ribosome. The chain is Large ribosomal subunit protein uL22 from Acidiphilium cryptum (strain JF-5).